The sequence spans 524 residues: Caffeate CoA-transferase (524 aa).

Glutamate 323 (5-glutamyl coenzyme A thioester intermediate) is an active-site residue.

This sequence belongs to the 3-oxoacid CoA-transferase family. In terms of assembly, homodimer.

The catalysed reaction is hydrocaffeoyl-CoA + (E)-caffeate = 3-(3,4-dihydroxyphenyl)propanoate + (E)-caffeoyl-CoA. Involved in caffeate respiration, which consists in the reduction of the C-C double bond of caffeate. CarA catalyzes an energy-saving CoA loop for caffeate activation in the steady state of caffeate respiration. It catalyzes the formation of caffeyl-CoA from caffeate with hydrocaffeyl-CoA as the CoA donor via a ping-pong mechanism. In addition to caffeate, the enzyme can utilize 4-coumarate or ferulate as CoA acceptor. Neither acetyl-CoA nor butyryl-CoA served as the CoA donor. The chain is Caffeate CoA-transferase from Acetobacterium woodii.